Consider the following 261-residue polypeptide: Acyl-[acyl-carrier-protein]--UDP-N-acetylglucosamine O-acyltransferase (261 aa).

It belongs to the transferase hexapeptide repeat family. LpxA subfamily. In terms of assembly, homotrimer.

It localises to the cytoplasm. The catalysed reaction is a (3R)-hydroxyacyl-[ACP] + UDP-N-acetyl-alpha-D-glucosamine = a UDP-3-O-[(3R)-3-hydroxyacyl]-N-acetyl-alpha-D-glucosamine + holo-[ACP]. The protein operates within glycolipid biosynthesis; lipid IV(A) biosynthesis; lipid IV(A) from (3R)-3-hydroxytetradecanoyl-[acyl-carrier-protein] and UDP-N-acetyl-alpha-D-glucosamine: step 1/6. In terms of biological role, involved in the biosynthesis of lipid A, a phosphorylated glycolipid that anchors the lipopolysaccharide to the outer membrane of the cell. This Aquifex aeolicus (strain VF5) protein is Acyl-[acyl-carrier-protein]--UDP-N-acetylglucosamine O-acyltransferase.